Consider the following 700-residue polypeptide: Peroxisomal acyl-coenzyme A oxidase 3 (700 aa).

A2 is subject to N-acetylalanine. Residue T281 is modified to Phosphothreonine. Residues 698-700 (SKL) carry the Microbody targeting signal motif.

This sequence belongs to the acyl-CoA oxidase family. The cofactor is FAD.

It localises to the peroxisome. It catalyses the reaction a 2,3-saturated acyl-CoA + O2 = a (2E)-enoyl-CoA + H2O2. The catalysed reaction is (2S)-pristanoyl-CoA + O2 = (2E)-pristenoyl-CoA + H2O2. The enzyme catalyses tetracosanoyl-CoA + O2 = (2E)-tetracosenoyl-CoA + H2O2. It carries out the reaction hexadecanoyl-CoA + O2 = (2E)-hexadecenoyl-CoA + H2O2. It catalyses the reaction hexadecanedioyl-CoA + O2 = (2E)-hexadecenedioyl-CoA + H2O2. It functions in the pathway lipid metabolism; peroxisomal fatty acid beta-oxidation. In terms of biological role, oxidizes the CoA-esters of 2-methyl-branched fatty acids. This is Peroxisomal acyl-coenzyme A oxidase 3 (ACOX3) from Homo sapiens (Human).